The sequence spans 340 residues: DNA-directed RNA polymerase subunit alpha (340 aa).

Residues 1 to 236 (MLSLSKNWNT…EQLQLFIAFE (236 aa)) are alpha N-terminal domain (alpha-NTD). Residues 251–340 (FSPYLLKRVD…LSKRYEDSYN (90 aa)) form an alpha C-terminal domain (alpha-CTD) region.

It belongs to the RNA polymerase alpha chain family. Homodimer. The RNAP catalytic core consists of 2 alpha, 1 beta, 1 beta' and 1 omega subunit. When a sigma factor is associated with the core the holoenzyme is formed, which can initiate transcription.

The enzyme catalyses RNA(n) + a ribonucleoside 5'-triphosphate = RNA(n+1) + diphosphate. Functionally, DNA-dependent RNA polymerase catalyzes the transcription of DNA into RNA using the four ribonucleoside triphosphates as substrates. The polypeptide is DNA-directed RNA polymerase subunit alpha (Rickettsia prowazekii (strain Madrid E)).